Reading from the N-terminus, the 509-residue chain is Photosystem II CP47 reaction center protein (509 aa).

6 consecutive transmembrane segments (helical) span residues 21 to 36 (SVHL…WAGS), 101 to 115 (IVLS…IWHW), 140 to 156 (GIHL…FGAF), 203 to 218 (IAAG…FHLN), 237 to 252 (VLSS…SFVV), and 457 to 472 (NFAL…HGSR).

It belongs to the PsbB/PsbC family. PsbB subfamily. PSII is composed of 1 copy each of membrane proteins PsbA, PsbB, PsbC, PsbD, PsbE, PsbF, PsbH, PsbI, PsbJ, PsbK, PsbL, PsbM, PsbT, PsbY, PsbZ, Psb30/Ycf12, at least 3 peripheral proteins of the oxygen-evolving complex and a large number of cofactors. It forms dimeric complexes. The cofactor is Binds multiple chlorophylls. PSII binds additional chlorophylls, carotenoids and specific lipids..

The protein localises to the plastid. Its subcellular location is the chloroplast thylakoid membrane. In terms of biological role, one of the components of the core complex of photosystem II (PSII). It binds chlorophyll and helps catalyze the primary light-induced photochemical processes of PSII. PSII is a light-driven water:plastoquinone oxidoreductase, using light energy to abstract electrons from H(2)O, generating O(2) and a proton gradient subsequently used for ATP formation. In Cyanidium caldarium (Red alga), this protein is Photosystem II CP47 reaction center protein.